Consider the following 379-residue polypeptide: tRNA(Met) cytidine acetate ligase (379 aa).

ATP contacts are provided by residues 7–20, glycine 100, asparagine 153, and arginine 178; that span reads ITEY…HQYH.

Belongs to the TmcAL family.

The protein localises to the cytoplasm. It catalyses the reaction cytidine(34) in elongator tRNA(Met) + acetate + ATP = N(4)-acetylcytidine(34) in elongator tRNA(Met) + AMP + diphosphate. Functionally, catalyzes the formation of N(4)-acetylcytidine (ac(4)C) at the wobble position of elongator tRNA(Met), using acetate and ATP as substrates. First activates an acetate ion to form acetyladenylate (Ac-AMP) and then transfers the acetyl group to tRNA to form ac(4)C34. This Staphylococcus aureus (strain MRSA252) protein is tRNA(Met) cytidine acetate ligase.